The following is a 136-amino-acid chain: Blasticidin-S acetyltransferase (136 aa).

The 136-residue stretch at 1 to 136 folds into the N-acetyltransferase domain; it reads MLSLPRLQTV…ITSHLLVKEL (136 aa).

Confers resistance to blasticidin S antibiotic. This chain is Blasticidin-S acetyltransferase (bls), found in Streptomyces morookaense (Streptoverticillium morookaense).